We begin with the raw amino-acid sequence, 120 residues long: uncharacterized protein (120 aa).

The N-terminal stretch at 1–18 (MRSWIPLLVLFAVLAVFA) is a signal peptide. The disordered stretch occupies residues 20–99 (AGKSSESDES…GDNRVKRDGL (80 aa)).

This is an uncharacterized protein from Caenorhabditis elegans.